Here is an 853-residue protein sequence, read N- to C-terminus: Deubiquitinase otu (853 aa).

The segment at 1–20 (MDMQVQRPITSGSRQAPDPY) is disordered. An OTU domain is found at 29–150 (LYRKHTARDA…ENHFDSVYDV (122 aa)). Residue Asp-37 is part of the active site. Ser-40 acts as the Nucleophile in catalysis. His-143 is an active-site residue. In terms of domain architecture, Tudor spans 336 to 396 (NFKVGAKCKV…HPLPPDEYRP (61 aa)). The tract at residues 396 to 853 (PWSLPFRYHR…AAVYAATRHH (458 aa)) is LC domain. Positions 460-470 (QDDEQRDHNDP) are enriched in basic and acidic residues. 4 disordered regions span residues 460-531 (QDDE…YVPM), 681-704 (AVES…LEKS), 732-794 (GPAA…AAQG), and 817-853 (NMDP…TRHH). Residues 499–517 (SRVQPQNSSSSQNQEVSGS) are compositionally biased toward low complexity. The span at 747-758 (NGSQFSFYTTPS) shows a compositional bias: polar residues. The span at 769-778 (LLQPPPPPPI) shows a compositional bias: pro residues. 2 stretches are compositionally biased toward low complexity: residues 783–794 (AGPPQLGGAAQG) and 820–838 (PSAQ…APLS).

In terms of assembly, self aggregates, forming amyloid-like fibrillar helical structures; protein aggregation is mediated by the C-terminal LC domain, is enhanced by RNA binding and is essential for deubiquitinase activity. Interacts (via OTU domain) with bam (via C-terminus); the interaction enhances otu aggregation and deubiquitinase activity. Together with bam interacts with CycA/cyclin-A; the interaction stabilizes CycA by promoting its deubiquitination. Together with bam interacts with Traf6. Interacts with Hrb27C; the interaction is RNA-independent. Associates (via N-terminus) with mRNP complexes; the interaction is weak. As to expression, expressed at high levels in the ovary, at low levels in the brain and fat body, and at moderate levels in the gut.

It is found in the cytoplasm. The protein localises to the cell cortex. It localises to the perinuclear region. Activated by protein aggregation, which is mediated by the LC domain and enhanced by RNA binding. In terms of biological role, catalytic component of a deubiquitinase complex consisting of bam and otu. The complex deubiquitinates K63-linked polyubiquitinated proteins; this antagonizes the ubiquitination activity of Traf6 and regulates the IMD immune signaling pathway. Otu-bam deubiquitinase activity is regulated by Traf6 dependent immune signaling regulation of bam expression levels; this forms a feedback loop that regulates the IMD immune signaling pathway and balances gut immune activity during aging. The complex deubiquitinates and stabilizes CycA/cyclin-A to regulate CycA-dependent differentiation. Involved in grk mRNA localization to the dorsal anterior region of the oocyte required for dorsal-ventral axis determination; may function as a ribonuclear protein complex together with sqd and Hrb27C. May regulate actin cytoskeleton organization in differentiating cystocytes during fusome maturation; required for efficient nurse cell cytoplasmic dumping during oogenesis. Essential for female fertility; involved in germ cell proliferation and germ cell differentiation. Involved in the early stages of germ cell proliferation and differentiation during oogenesis. Required for polytene chromosome dispersal in nurse cells during oogenesis. Functionally, involved in the later stages of germ cell proliferation and differentiation during oogenesis. This is Deubiquitinase otu from Drosophila melanogaster (Fruit fly).